The primary structure comprises 341 residues: HTH-type transcriptional repressor PurR (341 aa).

An HTH lacI-type domain is found at 2–56 (ATIKDVAKRANVSTTTVSHVINKTRFVAEETRNAVWAAIKELHYSPSAVARSLKV). The segment at residues 4–23 (IKDVAKRANVSTTTVSHVIN) is a DNA-binding region (H-T-H motif). Residues 48–56 (SAVARSLKV) mediate DNA binding. Hypoxanthine is bound by residues Tyr-73, Arg-190, Thr-192, Phe-221, and Asp-275.

In terms of assembly, homodimer.

Its pathway is purine metabolism; purine nucleotide biosynthesis [regulation]. Functionally, is the main repressor of the genes involved in the de novo synthesis of purine nucleotides, regulating purB, purC, purEK, purF, purHD, purL, purMN and guaBA expression. PurR is allosterically activated to bind its cognate DNA by binding the purine corepressors, hypoxanthine or guanine, thereby effecting transcription repression. The polypeptide is HTH-type transcriptional repressor PurR (Shigella sonnei (strain Ss046)).